Here is a 558-residue protein sequence, read N- to C-terminus: Mitochondrial nucleoid-associated protein 1 (558 aa).

The Extracellular segment spans residues 1–527 (MGAAEPRMEV…VQCNTTIKKS (527 aa)). 3 disordered regions span residues 29–88 (KMRG…SWTA), 130–205 (LQRV…KLGT), and 222–269 (LSDR…KTQK). Polar residues predominate over residues 36–45 (SADQNVSQSK). A compositionally biased stretch (basic and acidic residues) spans 51-81 (QKEKSPTRDLTRAKEKELEVDRPKRAVKAET). 2 stretches are compositionally biased toward polar residues: residues 131 to 144 (QRVT…SDAT) and 187 to 197 (SSTQPHANPAT). Residues 528–548 (GVGGLTMLFAGYFILCCNWSF) traverse the membrane as a helical segment. Residues 549 to 558 (KHLKLQHWRK) are Cytoplasmic-facing.

The protein resides in the mitochondrion inner membrane. Its subcellular location is the mitochondrion matrix. The protein localises to the mitochondrion nucleoid. In terms of biological role, critical regulator of mitochondrial DNA (mtDNA) abundance. Binds dsDNA throughout the mitochondrial genome without sequence specificity and controls mtDNA copy number by promoting its replication. Also plays important roles in mitochondrial metabolism and cell proliferation. The protein is Mitochondrial nucleoid-associated protein 1 of Mus musculus (Mouse).